A 44-amino-acid polypeptide reads, in one-letter code: Relaxin (44 aa).

Gln-1 bears the Pyrrolidone carboxylic acid mark. 3 disulfides stabilise this stretch: Cys-3-Cys-31, Cys-15-Cys-44, and Cys-30-Cys-35.

This sequence belongs to the insulin family. Heterodimer of a B chain and an A chain linked by two disulfide bonds.

The protein localises to the secreted. In Carcharias taurus (Sand tiger shark), this protein is Relaxin.